Consider the following 535-residue polypeptide: Keratin, type II cytoskeletal 79 (535 aa).

Polar residues-rich tracts occupy residues 1–12 (MRSSVSRQTYST) and 28–38 (QARTSFSSVTV). Residues 1-53 (MRSSVSRQTYSTKGAFSSSSASGGGGSQARTSFSSVTVSRNSGRGGGPRCGPS) form a disordered region. The segment at 1–141 (MRSSVSRQTY…DPEIQRVRTE (141 aa)) is head. The segment covering 43–53 (GRGGGPRCGPS) has biased composition (gly residues). The segment at 142 to 177 (EREQIKTLNNKFASFIDKVRFLEQQNKVLETKWALL) is coil 1A. Residues 142-457 (EREQIKTLNN…KLLESEESRM (316 aa)) enclose the IF rod domain. The linker 1 stretch occupies residues 178 to 198 (QEQGQKSGVTRNNLEPLFEHF). The segment at 199 to 290 (INNLRGKLDN…HLYEEELSQV (92 aa)) is coil 1B. The segment at 291-314 (QTHVSDTSVILSMDNNRNLDLDSI) is linker 12. The coil 2 stretch occupies residues 315 to 453 (IAEVKAQYEQ…ATYRKLLESE (139 aa)). The tail stretch occupies residues 454–535 (ESRMSGECPS…TTVKTSSRRY (82 aa)).

The protein belongs to the intermediate filament family. Heterotetramer of two type I and two type II keratins.

This is Keratin, type II cytoskeletal 79 (KRT79) from Bos taurus (Bovine).